The following is a 387-amino-acid chain: GTPase Obg (387 aa).

The Obg domain occupies Met-1–Leu-159. In terms of domain architecture, OBG-type G spans Ala-160–Glu-333. GTP-binding positions include Gly-166–Ser-173, Phe-191–Val-195, Asp-213–Gly-216, Asn-283–Asp-286, and Ser-314–Phe-316. Mg(2+) is bound by residues Ser-173 and Thr-193. Residues Ala-361–Gln-387 are disordered. The segment covering Asp-367–Gln-387 has biased composition (acidic residues).

This sequence belongs to the TRAFAC class OBG-HflX-like GTPase superfamily. OBG GTPase family. Monomer. The cofactor is Mg(2+).

It localises to the cytoplasm. An essential GTPase which binds GTP, GDP and possibly (p)ppGpp with moderate affinity, with high nucleotide exchange rates and a fairly low GTP hydrolysis rate. Plays a role in control of the cell cycle, stress response, ribosome biogenesis and in those bacteria that undergo differentiation, in morphogenesis control. This chain is GTPase Obg, found in Colwellia psychrerythraea (strain 34H / ATCC BAA-681) (Vibrio psychroerythus).